The primary structure comprises 164 residues: MSDTFWAFVGLVLFLALLVYFQIPQKIIHHLDARAKRIKDELDEALRLREEAQEILAEYQRKHAEAEKDAQEIIAAAKHEVESVIAEARTKAEEYVKNRNKLAEQKIAQAEADAIRMVSSSAIDLAISTARVLIAKELDSNRADELVKEALSKESLSKMKTHLN.

A helical transmembrane segment spans residues 4-24 (TFWAFVGLVLFLALLVYFQIP).

It belongs to the ATPase B chain family. In terms of assembly, F-type ATPases have 2 components, F(1) - the catalytic core - and F(0) - the membrane proton channel. F(1) has five subunits: alpha(3), beta(3), gamma(1), delta(1), epsilon(1). F(0) has three main subunits: a(1), b(2) and c(10-14). The alpha and beta chains form an alternating ring which encloses part of the gamma chain. F(1) is attached to F(0) by a central stalk formed by the gamma and epsilon chains, while a peripheral stalk is formed by the delta and b chains.

It localises to the cell inner membrane. F(1)F(0) ATP synthase produces ATP from ADP in the presence of a proton or sodium gradient. F-type ATPases consist of two structural domains, F(1) containing the extramembraneous catalytic core and F(0) containing the membrane proton channel, linked together by a central stalk and a peripheral stalk. During catalysis, ATP synthesis in the catalytic domain of F(1) is coupled via a rotary mechanism of the central stalk subunits to proton translocation. Functionally, component of the F(0) channel, it forms part of the peripheral stalk, linking F(1) to F(0). The protein is ATP synthase subunit b 2 of Bartonella tribocorum (strain CIP 105476 / IBS 506).